The chain runs to 340 residues: Probable peroxidase 61 (340 aa).

A signal peptide spans 1–25 (MQFVNFFPLLALVVISLAGKATVEA). Disulfide bonds link C46–C122, C79–C84, C128–C331, and C205–C237. N-linked (GlcNAc...) asparagine glycosylation is present at N63. R73 is an active-site residue. The Ca(2+) site is built by D78, V81, G83, D85, and S87. P168 lines the substrate pocket. H198 serves as a coordination point for heme b. Position 199 (S199) interacts with Ca(2+). Residue N226 is glycosylated (N-linked (GlcNAc...) asparagine). Positions 255 and 258 each coordinate Ca(2+).

The protein belongs to the peroxidase family. Classical plant (class III) peroxidase subfamily. Heme b serves as cofactor. The cofactor is Ca(2+).

The protein resides in the secreted. The enzyme catalyses 2 a phenolic donor + H2O2 = 2 a phenolic radical donor + 2 H2O. In terms of biological role, removal of H(2)O(2), oxidation of toxic reductants, biosynthesis and degradation of lignin, suberization, auxin catabolism, response to environmental stresses such as wounding, pathogen attack and oxidative stress. The enzyme activity has to be proved. In Arabidopsis thaliana (Mouse-ear cress), this protein is Probable peroxidase 61 (PER61).